The primary structure comprises 446 residues: MNAQEANFDGLVGPTHNYAGLSFGNVASLNNEKSAANPKAAAKQGLRKMKQLADLGFAQGVLPPQERPSLRLLRELGFSGKDADVIAKAAKQAPELLAAASSASAMWTANAATVSPSADTGDGRVHFTPANLCSKLHRAIEHEATRRTLSTLFADPAHFAVHEALTGTPALGDEGAANHTRFCAEYGKPGVEFFVYGRAEYRRGPEPKRFPARQTFEASRAVAQRHGLDETATVYAQQDPDVIDAGVFHNDVISVGNRDTLFTHERAFVNKQAIYDTLTATLDARGARLNVIEVPEAAVSVNDAVTSYLFNSQLLSRADGSQVLVVPQECRENANVAAYLDELAAGNGPIRDVLVFDLRESMKNGGGPACLRLRVVLNDAERAAVTSNVWMNDTLFASLDAWIEKHYRDRLAPDDLADPTLLDESRTALDELTQILRVGSLYDFQR.

Substrate contacts are provided by residues 19-28 (AGLSFGNVAS), Asn-110, and 137-138 (HR). The active site involves Glu-174. Arg-213 serves as a coordination point for substrate. His-249 is a catalytic residue. 2 residues coordinate substrate: Asp-251 and Asn-364. The active-site Nucleophile is Cys-370.

The protein belongs to the succinylarginine dihydrolase family. As to quaternary structure, homodimer.

It carries out the reaction N(2)-succinyl-L-arginine + 2 H2O + 2 H(+) = N(2)-succinyl-L-ornithine + 2 NH4(+) + CO2. The protein operates within amino-acid degradation; L-arginine degradation via AST pathway; L-glutamate and succinate from L-arginine: step 2/5. Functionally, catalyzes the hydrolysis of N(2)-succinylarginine into N(2)-succinylornithine, ammonia and CO(2). The chain is N-succinylarginine dihydrolase from Burkholderia ambifaria (strain MC40-6).